The following is a 505-amino-acid chain: Cyclic AMP-dependent transcription factor ATF-2 (505 aa).

A Nuclear export signal 1 (N-NES) motif is present at residues 1–7; sequence MKFKLHV. The C2H2-type zinc-finger motif lies at 25–49; that stretch reads FLCTAPGCGQRFTNEDHLAVHKHKH. Thr-52 is subject to Phosphothreonine; by PKC/PRKCH. Ser-62 is modified (phosphoserine; by VRK1). Thr-69 is modified (phosphothreonine; by MAPK11 and MAPK14). A Phosphothreonine; by MAPK1, MAPK3, MAPK11, MAPK12, MAPK14 and PLK3 modification is found at Thr-71. Thr-73 is modified (phosphothreonine; by VRK1). Phosphoserine occurs at positions 90 and 112. Phosphothreonine is present on Thr-116. Ser-121 carries the phosphoserine; by PKC/PRKCA and PKC/PRKCB modification. Disordered stretches follow at residues 125–155 and 259–373; these read EPSV…PLAQ and PGIP…RQKR. Ser-136 bears the Phosphoserine mark. A compositionally biased stretch (polar residues) spans 282–293; it reads LTQQHPPVTNGD. The interval 296–299 is essential for its histone acetyltransferase activity; sequence KGHG. Positions 318 to 334 are enriched in low complexity; that stretch reads PATSTTETPASPAHTTP. At Ser-328 the chain carries Phosphoserine. Ser-340 is modified (phosphoserine; by PKC/PRKCA and PKC/PRKCB). The span at 346-363 shows a compositional bias: basic and acidic residues; it reads AANEDPDEKRRKFLERNR. The 64-residue stretch at 352–415 folds into the bZIP domain; the sequence is DEKRRKFLER…AQLKQLLLAH (64 aa). Residues 354–374 are basic motif; sequence KRRKFLERNRAAASRCRQKRK. Position 357 is an N6-acetyllysine (Lys-357). Ser-367 carries the post-translational modification Phosphoserine; by PKC/PRKCA and PKC/PRKCB. Lys-374 carries the N6-acetyllysine modification. Residues 380 to 408 are leucine-zipper; the sequence is LEKKAEDLSSLNGQLQSEVTLLRNEVAQL. A Nuclear export signal 2 (C-NES) motif is present at residues 405–414; the sequence is VAQLKQLLLA. The interval 425 to 472 is disordered; that stretch reads KKSGYHTADKDDSSEDISVPSSPHTEAIQHSSVSTSNGVSSTSKAEAV. Phosphoserine is present on residues Ser-442 and Ser-446. A compositionally biased stretch (polar residues) spans 443-454; that stretch reads VPSSPHTEAIQH. The segment covering 455–467 has biased composition (low complexity); the sequence is SSVSTSNGVSSTS. Ser-490 and Ser-498 each carry phosphoserine; by ATM.

This sequence belongs to the bZIP family. ATF subfamily. As to quaternary structure, binds DNA as a dimer and can form a homodimer in the absence of DNA. Can form a heterodimer with JUN. Heterodimerization is essential for its transcriptional activity. Interacts with SMAD3 and SMAD4. Binds through its N-terminal region to UTF1 which acts as a coactivator of ATF2 transcriptional activity. Interacts with the HK1/VDAC1 complex. Interacts with NBN, MRE11, XPO1, KAT5 and CUL3. In terms of processing, phosphorylation of Thr-69 by MAPK14 and MAPK11, and at Thr-71 by MAPK1/ERK2, MAPK3/ERK1, MAPK11, MAPK12 and MAPK14 in response to external stimulus like insulin causes increased transcriptional activity. Phosphorylated by PLK3 following hyperosmotic stress. Also phosphorylated and activated by JNK and CaMK4. ATM-mediated phosphorylation at Ser-490 and Ser-498 stimulates its function in DNA damage response. Phosphorylation at Ser-62, Thr-73 and Ser-121 activates its transcriptional activity. Phosphorylation at Thr-69 or Thr-71 enhances acetylation of histones H2B and H4. Ubiquitously expressed, with more abundant expression in the brain.

It is found in the nucleus. The protein resides in the cytoplasm. The protein localises to the mitochondrion outer membrane. In terms of biological role, transcriptional activator which regulates the transcription of various genes, including those involved in anti-apoptosis, cell growth, and DNA damage response. Dependent on its binding partner, binds to CRE (cAMP response element) consensus sequences (5'-TGACGTCA-3') or to AP-1 (activator protein 1) consensus sequences (5'-TGACTCA-3'). In the nucleus, contributes to global transcription and the DNA damage response, in addition to specific transcriptional activities that are related to cell development, proliferation and death. In the cytoplasm, interacts with and perturbs HK1- and VDAC1-containing complexes at the mitochondrial outer membrane, thereby impairing mitochondrial membrane potential, inducing mitochondrial leakage and promoting cell death. The phosphorylated form (mediated by ATM) plays a role in the DNA damage response and is involved in the ionizing radiation (IR)-induced S phase checkpoint control and in the recruitment of the MRN complex into the IR-induced foci (IRIF). Exhibits histone acetyltransferase (HAT) activity which specifically acetylates histones H2B and H4 in vitro. In concert with CUL3 and RBX1, promotes the degradation of KAT5 thereby attenuating its ability to acetylate and activate ATM. Can elicit oncogenic or tumor suppressor activities depending on the tissue or cell type. This chain is Cyclic AMP-dependent transcription factor ATF-2 (ATF2), found in Homo sapiens (Human).